The sequence spans 495 residues: Monoamine oxidase N (495 aa).

A compositionally biased stretch (polar residues) spans Met-1–Val-19. The segment at Met-1–Gly-23 is disordered. Positions Ala-493–Leu-495 match the Microbody targeting signal motif.

The protein belongs to the flavin monoamine oxidase family. FAD serves as cofactor.

It is found in the peroxisome. It catalyses the reaction a secondary aliphatic amine + O2 + H2O = a primary amine + an aldehyde + H2O2. This is Monoamine oxidase N (maoN) from Aspergillus niger.